Reading from the N-terminus, the 294-residue chain is Putative lipid kinase SP_1045 (294 aa).

The DAGKc domain occupies 1–131; sequence MKKAMVIINP…IDIGKANDNY (131 aa). ATP-binding positions include 9–13, Thr40, 66–72, and Thr93; these read NPTSG and GDGTVNE. The Mg(2+) site is built by Asp212 and Tyr214. Asp269 (proton acceptor) is an active-site residue.

It belongs to the diacylglycerol/lipid kinase family. It depends on Mg(2+) as a cofactor.

May catalyze the ATP-dependent phosphorylation of lipids other than diacylglycerol (DAG). In fact, is not able to exhibit diacylglycerol kinase activity in vitro. The chain is Putative lipid kinase SP_1045 from Streptococcus pneumoniae serotype 4 (strain ATCC BAA-334 / TIGR4).